Reading from the N-terminus, the 342-residue chain is Nucleoid-associated protein SO_2177 (342 aa).

The protein belongs to the YejK family.

It localises to the cytoplasm. Its subcellular location is the nucleoid. The chain is Nucleoid-associated protein SO_2177 from Shewanella oneidensis (strain ATCC 700550 / JCM 31522 / CIP 106686 / LMG 19005 / NCIMB 14063 / MR-1).